A 174-amino-acid chain; its full sequence is Large ribosomal subunit protein uL6 (174 aa).

Belongs to the universal ribosomal protein uL6 family. As to quaternary structure, part of the 50S ribosomal subunit.

Functionally, this protein binds to the 23S rRNA, and is important in its secondary structure. It is located near the subunit interface in the base of the L7/L12 stalk, and near the tRNA binding site of the peptidyltransferase center. The polypeptide is Large ribosomal subunit protein uL6 (Stenotrophomonas maltophilia (strain R551-3)).